Here is a 393-residue protein sequence, read N- to C-terminus: Cell division protein FtsZ 2 (393 aa).

A disordered region spans residues 1-28 (MQDIVQDALDNAEAEQREMDGDGDGDEF). Residues 40–44 (GAGNN), 127–129 (GTG), glutamate 158, arginine 161, and aspartate 204 contribute to the GTP site. Residues 339 to 393 (GPSTQKQADKSRRELQDVDSKQRAADDAGAGGFGGAHSDGGQDEVEQENGLDVIR) are disordered. Over residues 345–364 (QADKSRRELQDVDSKQRAAD) the composition is skewed to basic and acidic residues. Over residues 367–376 (GAGGFGGAHS) the composition is skewed to gly residues.

This sequence belongs to the FtsZ family. Homodimer. Polymerizes to form a dynamic ring structure in a strictly GTP-dependent manner. Interacts directly with several other division proteins.

Its subcellular location is the cytoplasm. Its function is as follows. Essential cell division protein that forms a contractile ring structure (Z ring) at the future cell division site. The regulation of the ring assembly controls the timing and the location of cell division. One of the functions of the FtsZ ring is to recruit other cell division proteins to the septum to produce a new cell wall between the dividing cells. Binds GTP and shows GTPase activity. Overexpression causes significant changes in cell morphology. This chain is Cell division protein FtsZ 2, found in Halobacterium salinarum (strain ATCC 29341 / DSM 671 / R1).